A 121-amino-acid chain; its full sequence is Splicing factor 3B subunit 6 (121 aa).

The interval 12 to 25 (EVNRLLYVRNLPYK) is interaction with pre-mRNA branch site. The RRM domain occupies 15–90 (RLLYVRNLPY…RYLVVLYYQS (76 aa)).

Belongs to the SF3B6 family. In terms of assembly, component of splicing factor SF3B complex. Component of the U11/U12 snRNPs that are part of the U12-type spliceosome.

It is found in the nucleus. Its function is as follows. Involved in pre-mRNA splicing as a component of the splicing factor SF3B complex. SF3B complex is required for 'A' complex assembly formed by the stable binding of U2 snRNP to the branchpoint sequence (BPS) in pre-mRNA. Directly contacts the pre-mRNA branch site adenosine for the first catalytic step of splicing. Enters the spliceosome and associates with the pre-mRNA branch site as part of the 17S U2 or, in the case of the minor spliceosome, as part of the 18S U11/U12 snRNP complex, and thus may facilitate the interaction of these snRNP with the branch sites of U2 and U12 respectively. This Drosophila melanogaster (Fruit fly) protein is Splicing factor 3B subunit 6.